The sequence spans 193 residues: Large ribosomal subunit protein bL25 (193 aa).

Belongs to the bacterial ribosomal protein bL25 family. CTC subfamily. As to quaternary structure, part of the 50S ribosomal subunit; part of the 5S rRNA/L5/L18/L25 subcomplex. Contacts the 5S rRNA. Binds to the 5S rRNA independently of L5 and L18.

This is one of the proteins that binds to the 5S RNA in the ribosome where it forms part of the central protuberance. The chain is Large ribosomal subunit protein bL25 from Lachnoclostridium phytofermentans (strain ATCC 700394 / DSM 18823 / ISDg) (Clostridium phytofermentans).